The chain runs to 158 residues: Putative metalloproteinase inhibitor tag-225 (158 aa).

An N-terminal signal peptide occupies residues M1 to A20. Zn(2+) is bound at residue C21. Residues C21–E25 are involved in metalloproteinase-binding. Disulfide bonds link C21–C96, C23–C123, and C33–C158. Positions C21–C158 constitute an NTR domain. N79 is a glycosylation site (N-linked (GlcNAc...) asparagine). Residues A93–P94 form an involved in metalloproteinase-binding region.

Belongs to the protease inhibitor I35 (TIMP) family.

Its subcellular location is the secreted. In terms of biological role, complexes with metalloproteinases and irreversibly inactivates them by binding to their catalytic zinc cofactor. The protein is Putative metalloproteinase inhibitor tag-225 (tag-225) of Caenorhabditis elegans.